The sequence spans 290 residues: Probable aquaporin PIP2-1 (290 aa).

Transmembrane regions (helical) follow at residues 43–63 and 80–100; these read AVIA…ATVI and CGGV…FILV. Residues 112–114 carry the NPA 1 motif; the sequence is NPA. A run of 3 helical transmembrane segments spans residues 131-151, 173-193, and 207-227; these read ILYI…VKAF, GTGL…VFSA, and VLAP…TIPI. The short motif at 233–235 is the NPA 2 element; that stretch reads NPA. A helical transmembrane segment spans residues 255–275; the sequence is IFWVGPFVGAAIAAFYHQYIL.

Belongs to the MIP/aquaporin (TC 1.A.8) family. PIP (TC 1.A.8.11) subfamily. In terms of tissue distribution, expressed in roots, leaves and anthers.

It is found in the cell membrane. Functionally, aquaporins facilitate the transport of water and small neutral solutes across cell membranes. The polypeptide is Probable aquaporin PIP2-1 (PIP2-1) (Oryza sativa subsp. japonica (Rice)).